A 456-amino-acid chain; its full sequence is GTPase Der (456 aa).

EngA-type G domains lie at proline 4–glutamate 169 and isoleucine 177–lysine 352. Residues glycine 10–serine 17, aspartate 57–leucine 61, asparagine 120–glutamate 123, glycine 183–serine 190, aspartate 230–isoleucine 234, and asparagine 295–aspartate 298 contribute to the GTP site. One can recognise a KH-like domain in the interval arginine 353–lysine 438.

The protein belongs to the TRAFAC class TrmE-Era-EngA-EngB-Septin-like GTPase superfamily. EngA (Der) GTPase family. In terms of assembly, associates with the 50S ribosomal subunit.

In terms of biological role, GTPase that plays an essential role in the late steps of ribosome biogenesis. The polypeptide is GTPase Der (Nostoc punctiforme (strain ATCC 29133 / PCC 73102)).